Consider the following 222-residue polypeptide: Cytidylate kinase (222 aa).

7 to 15 contacts ATP; sequence GPAGAGKST.

Belongs to the cytidylate kinase family. Type 1 subfamily.

Its subcellular location is the cytoplasm. The enzyme catalyses CMP + ATP = CDP + ADP. It carries out the reaction dCMP + ATP = dCDP + ADP. The polypeptide is Cytidylate kinase (Carboxydothermus hydrogenoformans (strain ATCC BAA-161 / DSM 6008 / Z-2901)).